We begin with the raw amino-acid sequence, 891 residues long: DNA polymerase I (891 aa).

A 5'-3' exonuclease domain is found at 1 to 313; that stretch reads MEQPVIKEGT…LLDNTPALDN (313 aa). Residues 314-488 form the 3'-5' exonuclease domain; the sequence is TPKKSCMIVL…RLCEYFEKGG (175 aa). The tract at residues 492–890 is polymerase; the sequence is NLLSLAREIE…FIAKRWNELK (399 aa).

Belongs to the DNA polymerase type-A family. As to quaternary structure, single-chain monomer with multiple functions.

It carries out the reaction DNA(n) + a 2'-deoxyribonucleoside 5'-triphosphate = DNA(n+1) + diphosphate. Functionally, in addition to polymerase activity, this DNA polymerase exhibits 3'-5' and 5'-3' exonuclease activity. In Helicobacter pylori (strain ATCC 700392 / 26695) (Campylobacter pylori), this protein is DNA polymerase I (polA).